Consider the following 446-residue polypeptide: tRNA modification GTPase MnmE (446 aa).

Arginine 24, glutamate 81, and lysine 120 together coordinate (6S)-5-formyl-5,6,7,8-tetrahydrofolate. Positions glycine 216–leucine 368 constitute a TrmE-type G domain. A K(+)-binding site is contributed by asparagine 226. GTP is bound by residues asparagine 226–serine 231, threonine 245–threonine 251, and aspartate 270–glycine 273. A Mg(2+)-binding site is contributed by serine 230. K(+)-binding residues include threonine 245, valine 247, and threonine 250. Threonine 251 lines the Mg(2+) pocket. Residue lysine 446 coordinates (6S)-5-formyl-5,6,7,8-tetrahydrofolate.

This sequence belongs to the TRAFAC class TrmE-Era-EngA-EngB-Septin-like GTPase superfamily. TrmE GTPase family. In terms of assembly, homodimer. Heterotetramer of two MnmE and two MnmG subunits. K(+) serves as cofactor.

Its subcellular location is the cytoplasm. Functionally, exhibits a very high intrinsic GTPase hydrolysis rate. Involved in the addition of a carboxymethylaminomethyl (cmnm) group at the wobble position (U34) of certain tRNAs, forming tRNA-cmnm(5)s(2)U34. This Xanthomonas euvesicatoria pv. vesicatoria (strain 85-10) (Xanthomonas campestris pv. vesicatoria) protein is tRNA modification GTPase MnmE.